Consider the following 390-residue polypeptide: S-adenosylmethionine synthase 3 (390 aa).

Glu9 contributes to the Mg(2+) binding site. His15 contributes to the ATP binding site. Position 43 (Glu43) interacts with K(+). Glu56 and Gln99 together coordinate L-methionine. ATP contacts are provided by residues 167–169 (DGK), 235–238 (SGRF), Asp246, 252–253 (RK), Ala269, Lys273, and Lys277. Asp246 is an L-methionine binding site. Lys277 lines the L-methionine pocket.

The protein belongs to the AdoMet synthase family. As to quaternary structure, homotetramer. The cofactor is Mn(2+). It depends on Mg(2+) as a cofactor. Requires Co(2+) as cofactor. K(+) is required as a cofactor. NH4(+) serves as cofactor. As to expression, mostly expressed in roots, and, to a lower extent, in hypocotyls and cotyledons.

It localises to the cytoplasm. The enzyme catalyses L-methionine + ATP + H2O = S-adenosyl-L-methionine + phosphate + diphosphate. The protein operates within amino-acid biosynthesis; S-adenosyl-L-methionine biosynthesis; S-adenosyl-L-methionine from L-methionine: step 1/1. With respect to regulation, inhibited by products of SAMS reaction (SAM, Pi, PPi), substrate analogs (cycloleucine and ethionine), and alternative nucleotides (GTP, CTP and ADP). Strongly repressed by PPPi. In terms of biological role, catalyzes the formation of S-adenosylmethionine from methionine and ATP. The reaction comprises two steps that are both catalyzed by the same enzyme: formation of S-adenosylmethionine (AdoMet) and triphosphate, and subsequent hydrolysis of the triphosphate. This is S-adenosylmethionine synthase 3 (SAMS3) from Catharanthus roseus (Madagascar periwinkle).